A 181-amino-acid polypeptide reads, in one-letter code: Adenine phosphoribosyltransferase 2 (181 aa).

At Ser2 the chain carries N-acetylserine.

This sequence belongs to the purine/pyrimidine phosphoribosyltransferase family.

The protein resides in the cytoplasm. It carries out the reaction AMP + diphosphate = 5-phospho-alpha-D-ribose 1-diphosphate + adenine. Its pathway is purine metabolism; AMP biosynthesis via salvage pathway; AMP from adenine: step 1/1. Functionally, catalyzes a salvage reaction resulting in the formation of AMP, that is energically less costly than de novo synthesis. May lack catalytic activity. The protein is Adenine phosphoribosyltransferase 2 (APT2) of Saccharomyces cerevisiae (strain ATCC 204508 / S288c) (Baker's yeast).